Here is a 309-residue protein sequence, read N- to C-terminus: Homoserine kinase (309 aa).

P95–A105 is a binding site for ATP.

This sequence belongs to the GHMP kinase family. Homoserine kinase subfamily.

Its subcellular location is the cytoplasm. It carries out the reaction L-homoserine + ATP = O-phospho-L-homoserine + ADP + H(+). It participates in amino-acid biosynthesis; L-threonine biosynthesis; L-threonine from L-aspartate: step 4/5. Functionally, catalyzes the ATP-dependent phosphorylation of L-homoserine to L-homoserine phosphate. This Streptomyces coelicolor (strain ATCC BAA-471 / A3(2) / M145) protein is Homoserine kinase.